A 477-amino-acid polypeptide reads, in one-letter code: Zinc finger C3HC-type protein 1-like (477 aa).

The segment at 95-149 (CAKYGWCNIECDMLKCSSCNAYLCASLQPILDFSKYKQRCVELQEALRKAHEKFC) adopts a C3HC-type zinc-finger fold. A disordered region spans residues 287–392 (SLSAPGTPVS…SSSSDTSPRS (106 aa)). Residues 354–363 (SMGQGENTGL) are compositionally biased toward polar residues. The segment covering 370 to 379 (SPHRRAKRPR) has biased composition (basic residues). A compositionally biased stretch (low complexity) spans 382-392 (SSSSSDTSPRS).

In terms of processing, phosphorylated. May also be weakly phosphorylated on Tyr residues.

It is found in the nucleus. It localises to the nucleus envelope. In terms of biological role, required for proper positioning of a substantial amount of TPR at the nuclear basket (NB) through interaction with TPR. The protein is Zinc finger C3HC-type protein 1-like (zc3hc1) of Xenopus laevis (African clawed frog).